Consider the following 227-residue polypeptide: Protein GET1 (227 aa).

Over 1–3 the chain is Lumenal; that stretch reads MSL. Residues 4–23 form a helical membrane-spanning segment; sequence LLTVFLIVFVTQLISWIGQN. Topologically, residues 24-107 are cytoplasmic; sequence VLLEWAYNLY…SFSTKFNAVI (84 aa). Residues 72–96 adopt a coiled-coil conformation; that stretch reads AKLRRSVDKGLAELEKLNSEIATAK. Residues 108–128 traverse the membrane as a helical segment; sequence WALTSGVNLVIGWWYGRKAVF. At 129–151 the chain is on the lumenal side; sequence YLPEGWMGPLTWWFSFPFAPRGS. A helical transmembrane segment spans residues 152–168; that stretch reads VSVGVWSFACKRVLLVL. Residues 169-227 are Cytoplasmic-facing; the sequence is ERMVKELFFAETQAKEVPVGFSPSSSSSSTPNPMSKASSGSPSPRRRTTVTVESEDEKS. The segment at 184–227 is disordered; sequence EVPVGFSPSSSSSSTPNPMSKASSGSPSPRRRTTVTVESEDEKS. The span at 190 to 211 shows a compositional bias: low complexity; sequence SPSSSSSSTPNPMSKASSGSPS.

This sequence belongs to the WRB/GET1 family. As to quaternary structure, interacts with GET3.

The protein localises to the endoplasmic reticulum membrane. Its function is as follows. Required for the post-translational delivery of tail-anchored (TA) proteins to the endoplasmic reticulum. Acts as a membrane receptor for soluble GET3, which recognizes and selectively binds the transmembrane domain of TA proteins in the cytosol. The chain is Protein GET1 from Coprinopsis cinerea (strain Okayama-7 / 130 / ATCC MYA-4618 / FGSC 9003) (Inky cap fungus).